The chain runs to 336 residues: Anthranilate phosphoribosyltransferase (336 aa).

Residues G79, 82 to 83, T87, 89 to 92, 107 to 115, and S119 each bind 5-phospho-alpha-D-ribose 1-diphosphate; these read GD, NIST, and KHGNRAMSS. Anthranilate is bound at residue G79. S91 contacts Mg(2+). Residue N110 participates in anthranilate binding. Residue R165 coordinates anthranilate. Residues D225 and E226 each coordinate Mg(2+).

Belongs to the anthranilate phosphoribosyltransferase family. In terms of assembly, homodimer. The cofactor is Mg(2+).

It catalyses the reaction N-(5-phospho-beta-D-ribosyl)anthranilate + diphosphate = 5-phospho-alpha-D-ribose 1-diphosphate + anthranilate. It functions in the pathway amino-acid biosynthesis; L-tryptophan biosynthesis; L-tryptophan from chorismate: step 2/5. In terms of biological role, catalyzes the transfer of the phosphoribosyl group of 5-phosphorylribose-1-pyrophosphate (PRPP) to anthranilate to yield N-(5'-phosphoribosyl)-anthranilate (PRA). In Dictyoglomus turgidum (strain DSM 6724 / Z-1310), this protein is Anthranilate phosphoribosyltransferase.